Reading from the N-terminus, the 509-residue chain is Hyaluronidase PH-20 (509 aa).

The first 35 residues, 1–35, serve as a signal peptide directing secretion; it reads MGVLKFKHIFFRSFVKSSGVSQIVFTFLLIPCCLT. Intrachain disulfides connect Cys60-Cys351 and Cys224-Cys238. A glycan (N-linked (GlcNAc...) asparagine) is linked at Asn82. The Proton donor role is filled by Glu148. N-linked (GlcNAc...) asparagine glycans are attached at residues Asn166, Asn235, Asn254, and Asn368. Cystine bridges form between Cys376-Cys387, Cys381-Cys435, and Cys437-Cys464. Asn393 carries N-linked (GlcNAc...) asparagine glycosylation. Residue Ser490 is the site of GPI-anchor amidated serine attachment. Positions 491 to 509 are cleaved as a propeptide — removed in mature form; sequence ATMFIVSILFLIISSVASL.

The protein belongs to the glycosyl hydrolase 56 family. Post-translationally, N-glycosylated. In terms of tissue distribution, testis.

The protein localises to the cell membrane. The enzyme catalyses Random hydrolysis of (1-&gt;4)-linkages between N-acetyl-beta-D-glucosamine and D-glucuronate residues in hyaluronate.. Functionally, involved in sperm-egg adhesion. Upon fertilization sperm must first penetrate a layer of cumulus cells that surrounds the egg before reaching the zona pellucida. The cumulus cells are embedded in a matrix containing hyaluronic acid which is formed prior to ovulation. This protein aids in penetrating the layer of cumulus cells by digesting hyaluronic acid. The polypeptide is Hyaluronidase PH-20 (SPAM1) (Homo sapiens (Human)).